The sequence spans 350 residues: Phosphotriesterase-related protein (350 aa).

A divalent metal cation-binding residues include His22, His24, Glu169, His201, His230, and Asp298.

The protein belongs to the metallo-dependent hydrolases superfamily. Phosphotriesterase family. The cofactor is a divalent metal cation.

The polypeptide is Phosphotriesterase-related protein (Drosophila melanogaster (Fruit fly)).